The following is a 280-amino-acid chain: Probable endonuclease 4 (280 aa).

H69, H109, E145, D179, H182, H216, D229, H231, and E261 together coordinate Zn(2+).

It belongs to the AP endonuclease 2 family. It depends on Zn(2+) as a cofactor.

It carries out the reaction Endonucleolytic cleavage to 5'-phosphooligonucleotide end-products.. Its function is as follows. Endonuclease IV plays a role in DNA repair. It cleaves phosphodiester bonds at apurinic or apyrimidinic (AP) sites, generating a 3'-hydroxyl group and a 5'-terminal sugar phosphate. The polypeptide is Probable endonuclease 4 (Pelodictyon phaeoclathratiforme (strain DSM 5477 / BU-1)).